We begin with the raw amino-acid sequence, 208 residues long: Protein-L-isoaspartate O-methyltransferase (208 aa).

Serine 59 is an active-site residue.

Belongs to the methyltransferase superfamily. L-isoaspartyl/D-aspartyl protein methyltransferase family.

It localises to the cytoplasm. The enzyme catalyses [protein]-L-isoaspartate + S-adenosyl-L-methionine = [protein]-L-isoaspartate alpha-methyl ester + S-adenosyl-L-homocysteine. Catalyzes the methyl esterification of L-isoaspartyl residues in peptides and proteins that result from spontaneous decomposition of normal L-aspartyl and L-asparaginyl residues. It plays a role in the repair and/or degradation of damaged proteins. The polypeptide is Protein-L-isoaspartate O-methyltransferase (Salmonella paratyphi A (strain ATCC 9150 / SARB42)).